Consider the following 292-residue polypeptide: 4-hydroxybenzoate octaprenyltransferase (292 aa).

The next 8 helical transmembrane spans lie at 20-40 (IGIL…ADGM), 43-63 (PMIL…GCAI), 94-114 (LLIA…LNLL), 135-155 (FFAM…PMAF), 160-180 (GTVP…VIAY), 209-229 (VAGI…AGIL), 234-254 (IWFY…YGMI), and 266-286 (FLHN…DTLF).

This sequence belongs to the UbiA prenyltransferase family. The cofactor is Mg(2+).

It is found in the cell inner membrane. The catalysed reaction is all-trans-octaprenyl diphosphate + 4-hydroxybenzoate = 4-hydroxy-3-(all-trans-octaprenyl)benzoate + diphosphate. It functions in the pathway cofactor biosynthesis; ubiquinone biosynthesis. Functionally, catalyzes the prenylation of para-hydroxybenzoate (PHB) with an all-trans polyprenyl group. Mediates the second step in the final reaction sequence of ubiquinone-8 (UQ-8) biosynthesis, which is the condensation of the polyisoprenoid side chain with PHB, generating the first membrane-bound Q intermediate 3-octaprenyl-4-hydroxybenzoate. The polypeptide is 4-hydroxybenzoate octaprenyltransferase (Nitrosomonas europaea (strain ATCC 19718 / CIP 103999 / KCTC 2705 / NBRC 14298)).